We begin with the raw amino-acid sequence, 561 residues long: SUN domain-containing protein 5 (561 aa).

Residues glycine 36 to valine 56 form a helical membrane-spanning segment. Positions asparagine 158 to alanine 318 constitute an SUN domain. The interval alanine 345 to alanine 367 is disordered. Positions methionine 454 to lysine 499 form a coiled coil. 2 consecutive transmembrane segments (helical) span residues leucine 501–threonine 521 and proline 540–leucine 560.

In terms of assembly, forms homomers. Interacts with SUN3 and TIK.

The protein resides in the membrane. Encodes a member of the mid-SUN subfamily of SUN-domain proteins. It is involved in early seed development and nuclear morphology. [TAIR]. This is SUN domain-containing protein 5 from Arabidopsis thaliana (Mouse-ear cress).